The sequence spans 206 residues: Small ribosomal subunit protein uS5 (206 aa).

Residues 1–42 (MENKTEVVVAENANNQTQPERKKFDRKPNRRPQGPKQFQKDD) form a disordered region. The S5 DRBM domain maps to 43 to 106 (FEEKVVTIRR…KEAKKNLIRV (64 aa)).

Belongs to the universal ribosomal protein uS5 family. As to quaternary structure, part of the 30S ribosomal subunit. Contacts proteins S4 and S8.

With S4 and S12 plays an important role in translational accuracy. Its function is as follows. Located at the back of the 30S subunit body where it stabilizes the conformation of the head with respect to the body. The protein is Small ribosomal subunit protein uS5 of Mesoplasma florum (strain ATCC 33453 / NBRC 100688 / NCTC 11704 / L1) (Acholeplasma florum).